Here is a 96-residue protein sequence, read N- to C-terminus: Small ribosomal subunit protein bS6 (96 aa).

It belongs to the bacterial ribosomal protein bS6 family.

Binds together with bS18 to 16S ribosomal RNA. This chain is Small ribosomal subunit protein bS6, found in Streptococcus thermophilus (strain ATCC BAA-250 / LMG 18311).